Reading from the N-terminus, the 146-residue chain is Ferredoxin-thioredoxin reductase catalytic chain, chloroplastic (146 aa).

The transit peptide at 1-31 (MNLQAVSCSFGFLSSPLGVTPRTSFRRFVIR) directs the protein to the chloroplast. Residue Cys-85 coordinates [4Fe-4S] cluster. Cys-87 (nucleophile) is an active-site residue. Cys-87 and Cys-117 are joined by a disulfide. [4Fe-4S] cluster-binding residues include Cys-104, Cys-106, and Cys-115.

This sequence belongs to the ferredoxin thioredoxin reductase beta subunit family. In terms of assembly, heterodimer of subunit A (variable subunit) and subunit B (catalytic subunit). Heterodimeric FTR forms a complex with ferredoxin and thioredoxin. The cofactor is [4Fe-4S] cluster.

Its subcellular location is the plastid. It localises to the chloroplast. It carries out the reaction [thioredoxin]-disulfide + 2 reduced [2Fe-2S]-[ferredoxin] + 2 H(+) = [thioredoxin]-dithiol + 2 oxidized [2Fe-2S]-[ferredoxin]. Catalytic subunit of the ferredoxin-thioredoxin reductase (FTR), which catalyzes the two-electron reduction of thioredoxins by the electrons provided by reduced ferredoxin. The chain is Ferredoxin-thioredoxin reductase catalytic chain, chloroplastic from Arabidopsis thaliana (Mouse-ear cress).